Reading from the N-terminus, the 416-residue chain is Adenylosuccinate synthetase (416 aa).

GTP is bound by residues 12-18 (GDEGKGK) and 40-42 (GHT). Residue Asp13 is the Proton acceptor of the active site. 2 residues coordinate Mg(2+): Asp13 and Gly40. IMP-binding positions include 13–16 (DEGK), 38–41 (NAGH), Thr125, Arg139, Gln219, Thr234, and Arg298. The active-site Proton donor is the His41. Substrate is bound at residue 294–300 (TVTGRKR). GTP-binding positions include Arg300, 326 to 328 (KLD), and 404 to 406 (STS).

Belongs to the adenylosuccinate synthetase family. As to quaternary structure, homodimer. Requires Mg(2+) as cofactor.

Its subcellular location is the cytoplasm. It carries out the reaction IMP + L-aspartate + GTP = N(6)-(1,2-dicarboxyethyl)-AMP + GDP + phosphate + 2 H(+). It participates in purine metabolism; AMP biosynthesis via de novo pathway; AMP from IMP: step 1/2. Plays an important role in the de novo pathway of purine nucleotide biosynthesis. Catalyzes the first committed step in the biosynthesis of AMP from IMP. In Aliarcobacter butzleri (strain RM4018) (Arcobacter butzleri), this protein is Adenylosuccinate synthetase.